We begin with the raw amino-acid sequence, 304 residues long: CRISPR-associated endonuclease Cas1 (304 aa).

Positions 148, 204, and 219 each coordinate Mn(2+).

It belongs to the CRISPR-associated endonuclease Cas1 family. Homodimer, forms a heterotetramer with a Cas2 homodimer. It depends on Mg(2+) as a cofactor. Mn(2+) serves as cofactor.

Functionally, CRISPR (clustered regularly interspaced short palindromic repeat), is an adaptive immune system that provides protection against mobile genetic elements (viruses, transposable elements and conjugative plasmids). CRISPR clusters contain spacers, sequences complementary to antecedent mobile elements, and target invading nucleic acids. CRISPR clusters are transcribed and processed into CRISPR RNA (crRNA). Acts as a dsDNA endonuclease. Involved in the integration of spacer DNA into the CRISPR cassette. In Neisseria meningitidis serogroup C (strain 8013), this protein is CRISPR-associated endonuclease Cas1.